The primary structure comprises 235 residues: Purine nucleoside phosphorylase DeoD-type (235 aa).

His-4 provides a ligand contact to a purine D-ribonucleoside. Phosphate contacts are provided by residues Gly-20, Arg-24, Arg-43, and 87 to 90 (RVGT). A purine D-ribonucleoside contacts are provided by residues Glu-162, 179-181 (EME), and 203-204 (SD). The active-site Proton donor is the Asp-204.

Belongs to the PNP/UDP phosphorylase family. Homohexamer; trimer of homodimers.

It catalyses the reaction a purine D-ribonucleoside + phosphate = a purine nucleobase + alpha-D-ribose 1-phosphate. The enzyme catalyses a purine 2'-deoxy-D-ribonucleoside + phosphate = a purine nucleobase + 2-deoxy-alpha-D-ribose 1-phosphate. Catalyzes the reversible phosphorolytic breakdown of the N-glycosidic bond in the beta-(deoxy)ribonucleoside molecules, with the formation of the corresponding free purine bases and pentose-1-phosphate. This is Purine nucleoside phosphorylase DeoD-type from Bacillus cereus (strain B4264).